The following is a 258-amino-acid chain: UPF0246 protein YaaA (258 aa).

It belongs to the UPF0246 family.

In Escherichia coli (strain 55989 / EAEC), this protein is UPF0246 protein YaaA.